Consider the following 287-residue polypeptide: 2-dehydro-3-deoxyphosphooctonate aldolase (287 aa).

The protein belongs to the KdsA family.

It localises to the cytoplasm. It carries out the reaction D-arabinose 5-phosphate + phosphoenolpyruvate + H2O = 3-deoxy-alpha-D-manno-2-octulosonate-8-phosphate + phosphate. It participates in carbohydrate biosynthesis; 3-deoxy-D-manno-octulosonate biosynthesis; 3-deoxy-D-manno-octulosonate from D-ribulose 5-phosphate: step 2/3. The protein operates within bacterial outer membrane biogenesis; lipopolysaccharide biosynthesis. This Magnetococcus marinus (strain ATCC BAA-1437 / JCM 17883 / MC-1) protein is 2-dehydro-3-deoxyphosphooctonate aldolase.